The following is a 165-amino-acid chain: UPF0114 protein in repA1-repA2 intergenic region (165 aa).

3 consecutive transmembrane segments (helical) span residues 15 to 35, 53 to 73, and 136 to 156; these read LMFPVYIGLAFGFVLLTVKFF, LVLIVLSLIDIALVGGLLVMV, and IMWCVVIHLTFVLSAFGMAYI.

This sequence belongs to the UPF0114 family.

The protein resides in the cell membrane. The polypeptide is UPF0114 protein in repA1-repA2 intergenic region (Buchnera aphidicola subsp. Thelaxes suberi).